The chain runs to 448 residues: Tubulin beta-1 chain (448 aa).

GTP-binding residues include Gln11, Glu69, Ser138, Gly142, Thr143, Gly144, Asn204, and Asn226. A Mg(2+)-binding site is contributed by Glu69. The disordered stretch occupies residues 428–448 (AGIGDDEEEDEEGVMGEEIDA). Over residues 430 to 448 (IGDDEEEDEEGVMGEEIDA) the composition is skewed to acidic residues.

The protein belongs to the tubulin family. Dimer of alpha and beta chains. A typical microtubule is a hollow water-filled tube with an outer diameter of 25 nm and an inner diameter of 15 nM. Alpha-beta heterodimers associate head-to-tail to form protofilaments running lengthwise along the microtubule wall with the beta-tubulin subunit facing the microtubule plus end conferring a structural polarity. Microtubules usually have 13 protofilaments but different protofilament numbers can be found in some organisms and specialized cells. Mg(2+) is required as a cofactor.

The protein resides in the cytoplasm. The protein localises to the cytoskeleton. Functionally, tubulin is the major constituent of microtubules, a cylinder consisting of laterally associated linear protofilaments composed of alpha- and beta-tubulin heterodimers. Microtubules grow by the addition of GTP-tubulin dimers to the microtubule end, where a stabilizing cap forms. Below the cap, tubulin dimers are in GDP-bound state, owing to GTPase activity of alpha-tubulin. In Echinococcus multilocularis (Fox tapeworm), this protein is Tubulin beta-1 chain (TUB-1).